Reading from the N-terminus, the 473-residue chain is Crt homolog 1 (473 aa).

Topologically, residues 1–49 (MTNNDKEKQPLLSSINNEDDNGATINIVEPVPWYSNIPQKIKNSMSKET) are cytoplasmic. Residues 50-70 (ITILIYVVLYVTSGVINSVLL) form a helical membrane-spanning segment. Residues 71-80 (KKVMNKFTNY) are Vacuolar-facing. A helical membrane pass occupies residues 81–101 (AFFLSQLTNFGYVPIFGAVTA). The Cytoplasmic portion of the chain corresponds to 102 to 121 (YKIFFTKDIPQETRDFPTRK). Residues 122-142 (FAIMGALDAITGFFVVIGGVS) traverse the membrane as a helical segment. The Vacuolar segment spans residues 143 to 146 (TSGP). The chain crosses the membrane as a helical span at residues 147-167 (LQQLLNQAIIPFTMIASFIFL). Residues 168-175 (KERYSLIQ) are Cytoplasmic-facing. Residues 176–196 (LGGALVIIGGVVTSLIPSLLG) traverse the membrane as a helical segment. The Vacuolar portion of the chain corresponds to 197–207 (GSSGGNKPFWN). A helical transmembrane segment spans residues 208–228 (FFYLLSVIPGALSNVYKDIGF). The Cytoplasmic segment spans residues 229 to 248 (QAVADMDVWYLQYWDSLYQS). A helical membrane pass occupies residues 249 to 269 (IFGLFLFPVNNWLPPPATVKF). Over 270–322 (EQILPFMKEGAECLAGINSIIPSYINGTSSFTATSCTYAPDATITCDDCHNAW) the chain is Vacuolar. Asparagine 295 carries an N-linked (GlcNAc...) asparagine glycan. Residues 323-343 (IVIILYMTINIIYNIFILLVL) traverse the membrane as a helical segment. Residues 344–352 (KHAGATVYS) lie on the Cytoplasmic side of the membrane. The helical transmembrane segment at 353 to 373 (IANTLRLPLTNIVFSIHFIMG) threads the bilayer. Serine 374 is a topological domain (vacuolar). Residues 375-395 (AVSPFSGLSVAGLVIILVGLG) form a helical membrane-spanning segment. Over 396 to 473 (GYRVGSMIKQ…AANNNNYGDA (78 aa)) the chain is Cytoplasmic.

It belongs to the CRT-like transporter family.

Its subcellular location is the vacuole membrane. Functionally, nutrient transporter. Involved in maintaining the osmotic homeostasis of the digestive vacuole. The sequence is that of Crt homolog 1 (crtp1) from Dictyostelium discoideum (Social amoeba).